Consider the following 70-residue polypeptide: MSRKMTGIVKTFDRKSGKGFIIPSDGRKEVQVHISAFTPRDAEVLIPGLRVEFCRVNGLRGPTAANVYLS.

The CSD domain maps to 7 to 67; the sequence is GIVKTFDRKS…GLRGPTAANV (61 aa).

It localises to the cytoplasm. The chain is Cold shock-like protein CspH (cspH) from Escherichia coli O6:H1 (strain CFT073 / ATCC 700928 / UPEC).